The following is a 245-amino-acid chain: Exosome complex component RRP41 (245 aa).

Residue alanine 2 is modified to N-acetylalanine.

Belongs to the RNase PH family. As to quaternary structure, component of the RNA exosome core complex (Exo-9), composed of EXOSC1, EXOSC2, EXOSC3, EXOSC4, EXOSC5, EXOSC6, EXOSC7, EXOSC8 and EXOSC9; within the complex interacts with EXOSC2, EXOSC7 and EXOSC9. The catalytically inactive RNA exosome core complex (Exo-9) associates with the catalytic subunit EXOSC10/RRP6. Exo-9 may associate with DIS3 to form the nucleolar exosome complex, or DIS3L to form the cytoplasmic exosome complex. Exo-9 is formed by a hexameric base ring consisting of the heterodimers EXOSC4-EXOSC9, EXOSC5-EXOSC8 and EXOSC6-EXOSC7, and a cap ring consisting of EXOSC1, EXOSC2 and EXOSC3. The RNA exosome complex associates with cofactors C1D/RRP47, MPHOSPH6/MPP6 and MTREX/MTR4. Interacts with DDX60. Interacts with DIS3; the interaction is direct.

It is found in the cytoplasm. The protein localises to the nucleus. It localises to the nucleolus. The protein resides in the nucleoplasm. Functionally, non-catalytic component of the RNA exosome complex which has 3'-&gt;5' exoribonuclease activity and participates in a multitude of cellular RNA processing and degradation events. In the nucleus, the RNA exosome complex is involved in proper maturation of stable RNA species such as rRNA, snRNA and snoRNA, in the elimination of RNA processing by-products and non-coding 'pervasive' transcripts, such as antisense RNA species and promoter-upstream transcripts (PROMPTs), and of mRNAs with processing defects, thereby limiting or excluding their export to the cytoplasm. The RNA exosome may be involved in Ig class switch recombination (CSR) and/or Ig variable region somatic hypermutation (SHM) by targeting AICDA deamination activity to transcribed dsDNA substrates. In the cytoplasm, the RNA exosome complex is involved in general mRNA turnover and specifically degrades inherently unstable mRNAs containing AU-rich elements (AREs) within their 3' untranslated regions, and in RNA surveillance pathways, preventing translation of aberrant mRNAs. It seems to be involved in degradation of histone mRNA. The catalytic inactive RNA exosome core complex of 9 subunits (Exo-9) is proposed to play a pivotal role in the binding and presentation of RNA for ribonucleolysis, and to serve as a scaffold for the association with catalytic subunits and accessory proteins or complexes. EXOSC4 binds to ARE-containing RNAs. The sequence is that of Exosome complex component RRP41 (EXOSC4) from Homo sapiens (Human).